We begin with the raw amino-acid sequence, 378 residues long: Ribosomal RNA large subunit methyltransferase G (378 aa).

This sequence belongs to the methyltransferase superfamily. RlmG family.

Its subcellular location is the cytoplasm. It catalyses the reaction guanosine(1835) in 23S rRNA + S-adenosyl-L-methionine = N(2)-methylguanosine(1835) in 23S rRNA + S-adenosyl-L-homocysteine + H(+). Its function is as follows. Specifically methylates the guanine in position 1835 (m2G1835) of 23S rRNA. This Escherichia coli O6:K15:H31 (strain 536 / UPEC) protein is Ribosomal RNA large subunit methyltransferase G.